Consider the following 286-residue polypeptide: Small ribosomal subunit protein uS2 (286 aa).

The tract at residues Glu213–Ser286 is disordered. The segment covering Ser227 to Val241 has biased composition (low complexity). Residues Trp244 to Asn270 show a composition bias toward polar residues. The span at Gly274–Ser286 shows a compositional bias: gly residues.

Belongs to the universal ribosomal protein uS2 family. As to quaternary structure, component of the small ribosomal subunit. Mature ribosomes consist of a small (40S) and a large (60S) subunit. The 40S subunit contains about 33 different proteins and 1 molecule of RNA (18S). The 60S subunit contains about 49 different proteins and 3 molecules of RNA (28S, 5.8S and 5S). Interacts with ribosomal protein S21.

The protein resides in the cytoplasm. Its function is as follows. Required for the assembly and/or stability of the 40S ribosomal subunit. Required for the processing of the 20S rRNA-precursor to mature 18S rRNA in a late step of the maturation of 40S ribosomal subunits. In Trichoplax adhaerens (Trichoplax reptans), this protein is Small ribosomal subunit protein uS2.